The primary structure comprises 385 residues: Heat-inducible transcription repressor HrcA (385 aa).

Belongs to the HrcA family.

In terms of biological role, negative regulator of class I heat shock genes (grpE-dnaK-dnaJ and groELS operons). Prevents heat-shock induction of these operons. The chain is Heat-inducible transcription repressor HrcA from Protochlamydia amoebophila (strain UWE25).